The following is a 692-amino-acid chain: Single-strand DNA endonuclease ASTE1 (692 aa).

This sequence belongs to the asteroid family.

Structure-specific DNA endonuclease that specifically cleaves single-stranded DNA and 3' overhang DNA. In Danio rerio (Zebrafish), this protein is Single-strand DNA endonuclease ASTE1 (aste1a).